A 505-amino-acid polypeptide reads, in one-letter code: GMP synthase [glutamine-hydrolyzing] (505 aa).

The 188-residue stretch at 3–190 folds into the Glutamine amidotransferase type-1 domain; it reads KVLVVNFGGQ…LRKIARISDV (188 aa). Catalysis depends on C80, which acts as the Nucleophile. Residues H164 and E166 contribute to the active site. The 190-residue stretch at 191 to 380 folds into the GMPS ATP-PPase domain; that stretch reads WRPEDQITRI…LGLPEDVVYR (190 aa). Position 218–224 (218–224) interacts with ATP; that stretch reads SGGVDST.

The enzyme catalyses XMP + L-glutamine + ATP + H2O = GMP + L-glutamate + AMP + diphosphate + 2 H(+). The protein operates within purine metabolism; GMP biosynthesis; GMP from XMP (L-Gln route): step 1/1. Its function is as follows. Catalyzes the synthesis of GMP from XMP. The chain is GMP synthase [glutamine-hydrolyzing] from Pyrobaculum aerophilum (strain ATCC 51768 / DSM 7523 / JCM 9630 / CIP 104966 / NBRC 100827 / IM2).